A 68-amino-acid polypeptide reads, in one-letter code: Intracellular calcium channel modulator CCP-Ts (68 aa).

The signal sequence occupies residues 1 to 23; it reads MNPKLLIVIGLLLATGVCSFAKA. Cystine bridges form between Cys33–Cys47, Cys40–Cys53, and Cys46–Cys62.

The protein belongs to the scorpion calcin-like family. As to expression, expressed by the venom gland. In intravenously injected mice, the labeled toxin has preference for heart, liver and lungs.

The protein localises to the secreted. Its subcellular location is the nucleus. Cell penetrating peptide (CPP) that increases intracellular calcium release through the activation of nuclear inositol 1,4,5-trisphosphate receptors (ITPR) of cardiomyocytes, thereby causing an increase in the contraction frequency of these cells. In vivo, this toxin is not lethal to mice, hovewer anti-CPP serum reduces venom lethality, suggesting that this toxin is lethal when it acts in synergy with other venom components. This is Intracellular calcium channel modulator CCP-Ts from Tityus serrulatus (Brazilian scorpion).